We begin with the raw amino-acid sequence, 355 residues long: (R,S)-reticuline 7-O-methyltransferase (355 aa).

Residues Val-197 to Gly-200, Asp-221, Asp-221 to Leu-222, Asp-241 to Met-242, and Lys-255 each bind S-adenosyl-L-methionine. The active-site Proton acceptor is His-259.

It belongs to the class I-like SAM-binding methyltransferase superfamily. Cation-independent O-methyltransferase family. In terms of assembly, homodimer. In terms of tissue distribution, expressed in capsules, buds and stems, and at lower levels in leaves. Localized to parenchyma cells within the vascular bundle, but only to those cells distal to laticifers. In roots, found in the pericycle within the stele.

The enzyme catalyses (S)-reticuline + S-adenosyl-L-methionine = (S)-laudanine + S-adenosyl-L-homocysteine + H(+). It catalyses the reaction (R)-reticuline + S-adenosyl-L-methionine = (R)-laudanine + S-adenosyl-L-homocysteine + H(+). Catalyzes the transfer of a methyl group to reticuline to form laudanine. Methylates the simple catechols guaiacol and isovanillic acid as well as the tetrahydrobenzylisoquinolines (R)-reticuline, (S)-reticuline, (R,S)-orientaline, (R)-protosinomenine and (R,S)-isoorientaline. Involved in the production of laudanine. In Papaver somniferum (Opium poppy), this protein is (R,S)-reticuline 7-O-methyltransferase.